The chain runs to 111 residues: Large ribosomal subunit protein P2 (111 aa).

Positions 62-111 (LASVPSGGAGGAAAAGGAAAAGGAAEAAPEEAKEEEKEESDDDMGFGLFD) are disordered. Over residues 76-88 (AGGAAAAGGAAEA) the composition is skewed to low complexity. The residue at position 101 (Ser-101) is a Phosphoserine.

It belongs to the eukaryotic ribosomal protein P1/P2 family. As to quaternary structure, P1 and P2 exist as dimers at the large ribosomal subunit.

Its function is as follows. Plays an important role in the elongation step of protein synthesis. This chain is Large ribosomal subunit protein P2, found in Podospora anserina (Pleurage anserina).